The following is a 212-amino-acid chain: ATP-dependent dethiobiotin synthetase BioD (212 aa).

12 to 17 is an ATP binding site; it reads DCGKTF. Thr16 contacts Mg(2+). The active site involves Lys33. Residue Ser37 participates in substrate binding. ATP contacts are provided by residues Asp50, 110 to 113, and 170 to 171; these read EGAG and NC. Mg(2+)-binding residues include Asp50 and Glu110.

The protein belongs to the dethiobiotin synthetase family. In terms of assembly, homodimer. Requires Mg(2+) as cofactor.

The protein localises to the cytoplasm. The enzyme catalyses (7R,8S)-7,8-diammoniononanoate + CO2 + ATP = (4R,5S)-dethiobiotin + ADP + phosphate + 3 H(+). The protein operates within cofactor biosynthesis; biotin biosynthesis; biotin from 7,8-diaminononanoate: step 1/2. In terms of biological role, catalyzes a mechanistically unusual reaction, the ATP-dependent insertion of CO2 between the N7 and N8 nitrogen atoms of 7,8-diaminopelargonic acid (DAPA, also called 7,8-diammoniononanoate) to form a ureido ring. This is ATP-dependent dethiobiotin synthetase BioD from Legionella pneumophila subsp. pneumophila (strain Philadelphia 1 / ATCC 33152 / DSM 7513).